The primary structure comprises 345 residues: uncharacterized protein (345 aa).

The disordered stretch occupies residues 1–98 (MNDEMKGKSG…ISGKSFIDPE (98 aa)). 3 stretches are compositionally biased toward basic and acidic residues: residues 18–27 (RSDDDSDKRT), 42–68 (SRAD…EDSP), and 76–86 (PGDETPEKADH).

It belongs to the class IV-like SAM-binding methyltransferase superfamily. RNA methyltransferase TrmH family.

This is an uncharacterized protein from Escherichia coli O157:H7.